The following is a 170-amino-acid chain: Adenine phosphoribosyltransferase (170 aa).

This sequence belongs to the purine/pyrimidine phosphoribosyltransferase family. In terms of assembly, homodimer.

The protein localises to the cytoplasm. It carries out the reaction AMP + diphosphate = 5-phospho-alpha-D-ribose 1-diphosphate + adenine. Its pathway is purine metabolism; AMP biosynthesis via salvage pathway; AMP from adenine: step 1/1. Functionally, catalyzes a salvage reaction resulting in the formation of AMP, that is energically less costly than de novo synthesis. This chain is Adenine phosphoribosyltransferase, found in Mycoplasmopsis pulmonis (strain UAB CTIP) (Mycoplasma pulmonis).